The chain runs to 134 residues: Large ribosomal subunit protein uL16 (134 aa).

Over residues 1–20 (MLLQPKRTKFRKMHKGRNRG) the composition is skewed to basic residues. The segment at 1–21 (MLLQPKRTKFRKMHKGRNRGT) is disordered.

The protein belongs to the universal ribosomal protein uL16 family. As to quaternary structure, part of the 50S ribosomal subunit.

Functionally, binds 23S rRNA and is also seen to make contacts with the A and possibly P site tRNAs. The sequence is that of Large ribosomal subunit protein uL16 from Blochmanniella pennsylvanica (strain BPEN).